A 211-amino-acid polypeptide reads, in one-letter code: Guanylate kinase (211 aa).

The Guanylate kinase-like domain maps to 7–185; that stretch reads GLLIVVTGPS…AVAELRAIIM (179 aa). 14–21 provides a ligand contact to ATP; that stretch reads GPSAVGKG.

This sequence belongs to the guanylate kinase family.

Its subcellular location is the cytoplasm. The enzyme catalyses GMP + ATP = GDP + ADP. Functionally, essential for recycling GMP and indirectly, cGMP. The protein is Guanylate kinase of Symbiobacterium thermophilum (strain DSM 24528 / JCM 14929 / IAM 14863 / T).